Consider the following 474-residue polypeptide: Aspartyl/glutamyl-tRNA(Asn/Gln) amidotransferase subunit B (474 aa).

Belongs to the GatB/GatE family. GatB subfamily. Heterotrimer of A, B and C subunits.

The catalysed reaction is L-glutamyl-tRNA(Gln) + L-glutamine + ATP + H2O = L-glutaminyl-tRNA(Gln) + L-glutamate + ADP + phosphate + H(+). It catalyses the reaction L-aspartyl-tRNA(Asn) + L-glutamine + ATP + H2O = L-asparaginyl-tRNA(Asn) + L-glutamate + ADP + phosphate + 2 H(+). Functionally, allows the formation of correctly charged Asn-tRNA(Asn) or Gln-tRNA(Gln) through the transamidation of misacylated Asp-tRNA(Asn) or Glu-tRNA(Gln) in organisms which lack either or both of asparaginyl-tRNA or glutaminyl-tRNA synthetases. The reaction takes place in the presence of glutamine and ATP through an activated phospho-Asp-tRNA(Asn) or phospho-Glu-tRNA(Gln). The chain is Aspartyl/glutamyl-tRNA(Asn/Gln) amidotransferase subunit B from Wolbachia pipientis wMel.